The sequence spans 156 residues: ATP synthase subunit b (156 aa).

The helical transmembrane segment at 7 to 29 threads the bilayer; it reads LFAQMVVFLVLAWFTMKFVWPPL.

This sequence belongs to the ATPase B chain family. F-type ATPases have 2 components, F(1) - the catalytic core - and F(0) - the membrane proton channel. F(1) has five subunits: alpha(3), beta(3), gamma(1), delta(1), epsilon(1). F(0) has three main subunits: a(1), b(2) and c(10-14). The alpha and beta chains form an alternating ring which encloses part of the gamma chain. F(1) is attached to F(0) by a central stalk formed by the gamma and epsilon chains, while a peripheral stalk is formed by the delta and b chains.

It is found in the cell inner membrane. F(1)F(0) ATP synthase produces ATP from ADP in the presence of a proton or sodium gradient. F-type ATPases consist of two structural domains, F(1) containing the extramembraneous catalytic core and F(0) containing the membrane proton channel, linked together by a central stalk and a peripheral stalk. During catalysis, ATP synthesis in the catalytic domain of F(1) is coupled via a rotary mechanism of the central stalk subunits to proton translocation. Functionally, component of the F(0) channel, it forms part of the peripheral stalk, linking F(1) to F(0). This is ATP synthase subunit b from Burkholderia cenocepacia (strain ATCC BAA-245 / DSM 16553 / LMG 16656 / NCTC 13227 / J2315 / CF5610) (Burkholderia cepacia (strain J2315)).